The primary structure comprises 126 residues: uncharacterized protein (126 aa).

A run of 2 helical transmembrane segments spans residues 40 to 57 (IDKWILGALAFVFAVSFF) and 72 to 94 (ILIAIGIFATFEIAIILAVILGG).

Its subcellular location is the cell membrane. This is an uncharacterized protein from Pasteurella multocida (strain Pm70).